Here is a 262-residue protein sequence, read N- to C-terminus: Hydroxyethylthiazole kinase (262 aa).

Position 50 (Met-50) interacts with substrate. ATP-binding residues include Arg-125 and Thr-171. Gly-198 serves as a coordination point for substrate.

It belongs to the Thz kinase family. Mg(2+) serves as cofactor.

It catalyses the reaction 5-(2-hydroxyethyl)-4-methylthiazole + ATP = 4-methyl-5-(2-phosphooxyethyl)-thiazole + ADP + H(+). It functions in the pathway cofactor biosynthesis; thiamine diphosphate biosynthesis; 4-methyl-5-(2-phosphoethyl)-thiazole from 5-(2-hydroxyethyl)-4-methylthiazole: step 1/1. Functionally, catalyzes the phosphorylation of the hydroxyl group of 4-methyl-5-beta-hydroxyethylthiazole (THZ). The polypeptide is Hydroxyethylthiazole kinase (Escherichia coli (strain 55989 / EAEC)).